Reading from the N-terminus, the 419-residue chain is Glutamate dehydrogenase (419 aa).

The active site involves K105. 219–225 (GYGNAGY) serves as a coordination point for NAD(+).

It belongs to the Glu/Leu/Phe/Val dehydrogenases family. As to quaternary structure, homohexamer.

The enzyme catalyses L-glutamate + NAD(+) + H2O = 2-oxoglutarate + NH4(+) + NADH + H(+). The catalysed reaction is L-glutamate + NADP(+) + H2O = 2-oxoglutarate + NH4(+) + NADPH + H(+). The chain is Glutamate dehydrogenase (gdhA) from Thermococcus profundus.